A 258-amino-acid polypeptide reads, in one-letter code: Triosephosphate isomerase (258 aa).

Asparagine 9–lysine 11 contacts substrate. Catalysis depends on histidine 95, which acts as the Electrophile. Glutamate 167 functions as the Proton acceptor in the catalytic mechanism. 2 residues coordinate substrate: glycine 173 and serine 212.

The protein belongs to the triosephosphate isomerase family. Homodimer.

The protein localises to the cytoplasm. The enzyme catalyses D-glyceraldehyde 3-phosphate = dihydroxyacetone phosphate. It functions in the pathway carbohydrate biosynthesis; gluconeogenesis. It participates in carbohydrate degradation; glycolysis; D-glyceraldehyde 3-phosphate from glycerone phosphate: step 1/1. Involved in the gluconeogenesis. Catalyzes stereospecifically the conversion of dihydroxyacetone phosphate (DHAP) to D-glyceraldehyde-3-phosphate (G3P). This Blochmanniella pennsylvanica (strain BPEN) protein is Triosephosphate isomerase.